A 319-amino-acid polypeptide reads, in one-letter code: Protein sprouty homolog 1 (319 aa).

M1 is subject to N-acetylmethionine. The disordered stretch occupies residues T54–Q157. The segment covering P69 to E79 has biased composition (basic and acidic residues). The segment covering S112–S131 has biased composition (low complexity). The region spanning Q183–C295 is the SPR domain.

This sequence belongs to the sprouty family. As to quaternary structure, forms heterodimers with SPRY2. Interacts with TESK1. Interacts with CAV1 (via C-terminus).

It localises to the cytoplasm. Its subcellular location is the membrane. Functionally, inhibits fibroblast growth factor (FGF)-induced retinal lens fiber differentiation, probably by inhibiting FGF-mediated phosphorylation of ERK1/2. Inhibits TGFB-induced epithelial-to-mesenchymal transition in lens epithelial cells. The chain is Protein sprouty homolog 1 (SPRY1) from Bos taurus (Bovine).